A 467-amino-acid chain; its full sequence is Dimethylamine methyltransferase MtbB1 (467 aa).

A non-standard amino acid (pyrrolysine) is located at residue O356.

The protein belongs to the dimethylamine methyltransferase family. May form homotetramers or homopentamers.

The catalysed reaction is Co(I)-[dimethylamine-specific corrinoid protein] + dimethylamine + H(+) = methyl-Co(III)-[dimethylamine-specific corrinoid protein] + methylamine. Its pathway is one-carbon metabolism; methanogenesis from dimethylamine. Catalyzes the transfer of a methyl group from dimethylamine to the corrinoid cofactor of MtbC. The major or perhaps only DMA methyltransferase expressed under inducing conditions. This Methanosarcina barkeri protein is Dimethylamine methyltransferase MtbB1.